Consider the following 397-residue polypeptide: Kappa-carrageenase (397 aa).

An N-terminal signal peptide occupies residues 1 to 25 (MKPISIVAFPIPAISMLLLSAVSQA). Residues 26–299 (ASMQPPIAKP…YVRTWVKVGN (274 aa)) enclose the GH16 domain. A disulfide bridge connects residues Cys98 and Cys268. Residue Glu163 is the Nucleophile of the active site. Residue Asp165 is part of the active site. Glu168 acts as the Proton donor in catalysis. Residues 316 to 387 (AVNSVQLSAA…TITVKTKNKG (72 aa)) form the BIG2 domain.

The protein belongs to the glycosyl hydrolase 16 family.

It localises to the periplasm. The catalysed reaction is Endohydrolysis of (1-&gt;4)-beta-D-linkages between D-galactose 4-sulfate and 3,6-anhydro-D-galactose in kappa-carrageenans.. In Pseudoalteromonas carrageenovora (Alteromonas carrageenovora), this protein is Kappa-carrageenase (cgkA).